Consider the following 142-residue polypeptide: Large ribosomal subunit protein uL13 (142 aa).

It belongs to the universal ribosomal protein uL13 family. In terms of assembly, part of the 50S ribosomal subunit.

This protein is one of the early assembly proteins of the 50S ribosomal subunit, although it is not seen to bind rRNA by itself. It is important during the early stages of 50S assembly. The protein is Large ribosomal subunit protein uL13 of Alcanivorax borkumensis (strain ATCC 700651 / DSM 11573 / NCIMB 13689 / SK2).